The sequence spans 69 residues: MTKSTELRQKDVAGLKTEVKELQKAHFGLRMQKATQQLTNTSTLRSTRRSIARAKTILAETIVKQGAKK.

The protein belongs to the universal ribosomal protein uL29 family.

The polypeptide is Large ribosomal subunit protein uL29 (Polaromonas sp. (strain JS666 / ATCC BAA-500)).